Here is a 665-residue protein sequence, read N- to C-terminus: DNA ligase (665 aa).

NAD(+) is bound by residues aspartate 35–aspartate 39, serine 88–leucine 89, and glutamate 117. The active-site N6-AMP-lysine intermediate is lysine 119. Arginine 140, glutamate 174, lysine 290, and lysine 314 together coordinate NAD(+). 4 residues coordinate Zn(2+): cysteine 406, cysteine 409, cysteine 424, and cysteine 429. In terms of domain architecture, BRCT spans lysine 588 to serine 665.

This sequence belongs to the NAD-dependent DNA ligase family. LigA subfamily. Mg(2+) serves as cofactor. Mn(2+) is required as a cofactor.

The catalysed reaction is NAD(+) + (deoxyribonucleotide)n-3'-hydroxyl + 5'-phospho-(deoxyribonucleotide)m = (deoxyribonucleotide)n+m + AMP + beta-nicotinamide D-nucleotide.. In terms of biological role, DNA ligase that catalyzes the formation of phosphodiester linkages between 5'-phosphoryl and 3'-hydroxyl groups in double-stranded DNA using NAD as a coenzyme and as the energy source for the reaction. It is essential for DNA replication and repair of damaged DNA. The polypeptide is DNA ligase (Metamycoplasma arthritidis (strain 158L3-1) (Mycoplasma arthritidis)).